The sequence spans 620 residues: Chaperone protein HscA homolog (620 aa).

The protein belongs to the heat shock protein 70 family.

Chaperone involved in the maturation of iron-sulfur cluster-containing proteins. Has a low intrinsic ATPase activity which is markedly stimulated by HscB. This chain is Chaperone protein HscA homolog, found in Shewanella oneidensis (strain ATCC 700550 / JCM 31522 / CIP 106686 / LMG 19005 / NCIMB 14063 / MR-1).